The primary structure comprises 198 residues: Nucleoid occlusion factor SlmA (198 aa).

The HTH tetR-type domain maps to 11-71 (PNRKHQILES…GLIDFIEESI (61 aa)). Residues 34–53 (TTAKLAAEVGFSEAALYRHF) constitute a DNA-binding region (H-T-H motif).

The protein belongs to the nucleoid occlusion factor SlmA family. In terms of assembly, homodimer. Interacts with FtsZ.

It localises to the cytoplasm. Its subcellular location is the nucleoid. In terms of biological role, required for nucleoid occlusion (NO) phenomenon, which prevents Z-ring formation and cell division over the nucleoid. Acts as a DNA-associated cell division inhibitor that binds simultaneously chromosomal DNA and FtsZ, and disrupts the assembly of FtsZ polymers. SlmA-DNA-binding sequences (SBS) are dispersed on non-Ter regions of the chromosome, preventing FtsZ polymerization at these regions. This is Nucleoid occlusion factor SlmA from Colwellia psychrerythraea (strain 34H / ATCC BAA-681) (Vibrio psychroerythus).